The primary structure comprises 87 residues: Cell division topological specificity factor (87 aa).

Belongs to the MinE family.

Functionally, prevents the cell division inhibition by proteins MinC and MinD at internal division sites while permitting inhibition at polar sites. This ensures cell division at the proper site by restricting the formation of a division septum at the midpoint of the long axis of the cell. The chain is Cell division topological specificity factor from Vibrio parahaemolyticus serotype O3:K6 (strain RIMD 2210633).